The primary structure comprises 320 residues: Eukaryotic translation initiation factor 3 subunit G (320 aa).

The disordered stretch occupies residues 1–59; it reads MPTGDFDSKPSWADQVEEEGEDDKCVTSELLKGIPLATGDTSPEPELLPGAPLPPPKEV. Phosphoserine is present on residues Ser-8 and Ser-11. Phosphothreonine occurs at positions 38 and 41. Phosphoserine occurs at positions 42, 189, 223, and 264. The segment at 209 to 234 is disordered; sequence KTGKYVPPSLRDGASRRGESMQPNRR. A compositionally biased stretch (basic and acidic residues) spans 221-234; it reads GASRRGESMQPNRR. The RRM domain maps to 239–317; it reads ATIRVTNLSE…LILNVEWAKP (79 aa).

As to quaternary structure, component of the eukaryotic translation initiation factor 3 (eIF-3) complex, which is composed of 13 subunits: EIF3A, EIF3B, EIF3C, EIF3D, EIF3E, EIF3F, EIF3G, EIF3H, EIF3I, EIF3J, EIF3K, EIF3L and EIF3M. The eIF-3 complex appears to include 3 stable modules: module A is composed of EIF3A, EIF3B, EIF3G and EIF3I; module B is composed of EIF3F, EIF3H, and EIF3M; and module C is composed of EIF3C, EIF3D, EIF3E, EIF3K and EIF3L. EIF3C of module C binds EIF3B of module A and EIF3H of module B, thereby linking the three modules. EIF3J is a labile subunit that binds to the eIF-3 complex via EIF3B. The eIF-3 complex interacts with RPS6KB1 under conditions of nutrient depletion. Mitogenic stimulation leads to binding and activation of a complex composed of MTOR and RPTOR, leading to phosphorylation and release of RPS6KB1 and binding of EIF4B to eIF-3. Interacts (via C-terminus) with AIFM1 (via N-terminus). Interacts with DHX33; the interaction is independent of RNA. Phosphorylated. Phosphorylation is enhanced upon serum stimulation.

The protein localises to the cytoplasm. It is found in the nucleus. The protein resides in the perinuclear region. Functionally, RNA-binding component of the eukaryotic translation initiation factor 3 (eIF-3) complex, which is required for several steps in the initiation of protein synthesis. The eIF-3 complex associates with the 40S ribosome and facilitates the recruitment of eIF-1, eIF-1A, eIF-2:GTP:methionyl-tRNAi and eIF-5 to form the 43S pre-initiation complex (43S PIC). The eIF-3 complex stimulates mRNA recruitment to the 43S PIC and scanning of the mRNA for AUG recognition. The eIF-3 complex is also required for disassembly and recycling of post-termination ribosomal complexes and subsequently prevents premature joining of the 40S and 60S ribosomal subunits prior to initiation. The eIF-3 complex specifically targets and initiates translation of a subset of mRNAs involved in cell proliferation, including cell cycling, differentiation and apoptosis, and uses different modes of RNA stem-loop binding to exert either translational activation or repression. This subunit can bind 18S rRNA. Its function is as follows. (Microbial infection) In case of FCV infection, plays a role in the ribosomal termination-reinitiation event leading to the translation of VP2. The polypeptide is Eukaryotic translation initiation factor 3 subunit G (Homo sapiens (Human)).